Here is a 453-residue protein sequence, read N- to C-terminus: Aminodeoxychorismate synthase component 1 (453 aa).

L-tryptophan is bound by residues S36, 43 to 46, and 240 to 242; these read YSRF and PFS. The active-site Proton donor is E258. K274 functions as the N6-(4-deoxychorismate)-lysine intermediate in the catalytic mechanism.

This sequence belongs to the anthranilate synthase component I family. In terms of assembly, monomer. Heterodimer consisting of two non-identical subunits: a glutamine amidotransferase subunit (PabA) and a aminodeoxychorismate synthase subunit (PabB). It depends on Mg(2+) as a cofactor.

It catalyses the reaction chorismate + L-glutamine = 4-amino-4-deoxychorismate + L-glutamate. Its pathway is cofactor biosynthesis; tetrahydrofolate biosynthesis; 4-aminobenzoate from chorismate: step 1/2. Inhibited by 6-diazo-5-oxo-L-norleucine (DON). The inhibition is competitive with glutamine but uncompetitive with chorismate. Also inhibited by 2-fluorochorismate. Its function is as follows. Part of a heterodimeric complex that catalyzes the two-step biosynthesis of 4-amino-4-deoxychorismate (ADC), a precursor of p-aminobenzoate (PABA) and tetrahydrofolate. In the first step, a glutamine amidotransferase (PabA) generates ammonia as a substrate that, along with chorismate, is used in the second step, catalyzed by aminodeoxychorismate synthase (PabB) to produce ADC. PabB, in the absence of PabA, can catalyze the formation of ADC in the presence of exogenous ammonia. This is Aminodeoxychorismate synthase component 1 (pabB) from Escherichia coli (strain K12).